A 217-amino-acid polypeptide reads, in one-letter code: Adenylate kinase (217 aa).

10-15 (GAGKGT) is an ATP binding site. An NMP region spans residues 30–59 (STGDMLRAAVKAGTPLGVEAKKVMDAGGLV). AMP contacts are provided by residues Thr-31, Arg-36, 57 to 59 (GLV), 85 to 88 (GFPR), and Gln-92. The segment at 122-159 (GRRAHLASGRTYHVKYNPPKVAGKDDLTGEDLVQRDDD) is LID. Residues Arg-123 and 132 to 133 (TY) each bind ATP. Residues Arg-156 and Arg-167 each contribute to the AMP site. Gly-203 lines the ATP pocket.

The protein belongs to the adenylate kinase family. Monomer.

Its subcellular location is the cytoplasm. It catalyses the reaction AMP + ATP = 2 ADP. Its pathway is purine metabolism; AMP biosynthesis via salvage pathway; AMP from ADP: step 1/1. Catalyzes the reversible transfer of the terminal phosphate group between ATP and AMP. Plays an important role in cellular energy homeostasis and in adenine nucleotide metabolism. The chain is Adenylate kinase from Aromatoleum aromaticum (strain DSM 19018 / LMG 30748 / EbN1) (Azoarcus sp. (strain EbN1)).